The primary structure comprises 2173 residues: Mediator of DNA damage checkpoint protein 1 (2173 aa).

The segment covering 1 to 19 has biased composition (acidic residues); the sequence is MEDTQAIDWDVEEEEETEQ. Residues 1 to 22 form a disordered region; the sequence is MEDTQAIDWDVEEEEETEQSSE. The interaction with CHEK2 stretch occupies residues 1–150; sequence MEDTQAIDWD…SRGPLTVEET (150 aa). The interaction with the MRN complex stretch occupies residues 2-222; it reads EDTQAIDWDV…PFAFNLNSDT (221 aa). The residue at position 4 (Thr-4) is a Phosphothreonine. Residues 54–105 enclose the FHA domain; the sequence is NVVGRMPDCSVALPFPSISKQHAEIEILAWDKAPILRDCGSLNGTQILRPPK. The residue at position 108 (Ser-108) is a Phosphoserine. The segment at 145-570 is required for nuclear localization (NLS1); sequence LTVEETPRVQ…PAKLLVVSLE (426 aa). A Phosphothreonine modification is found at Thr-146. Phosphoserine is present on residues Ser-168, Ser-176, Ser-198, and Ser-220. The segment at 198-320 is disordered; it reads SDEEGHSPVL…PPGRPAEVHL (123 aa). A Phosphothreonine modification is found at Thr-222. Residues 227 to 244 show a composition bias toward low complexity; sequence GQQSATEEASSAARRGAT. The span at 259-276 shows a compositional bias: basic and acidic residues; sequence QLEKDQPSVKERDNDTKV. Position 301 is a phosphoserine (Ser-301). At Thr-303 the chain carries Phosphothreonine. Over residues 308–320 the composition is skewed to basic and acidic residues; that stretch reads DSRPPGRPAEVHL. Ser-331 is subject to Phosphoserine. A Phosphothreonine modification is found at Thr-333. Positions 359 to 383 are disordered; it reads GTRGPGAPGLSHLQESQAGSDTDVE. Phosphoserine is present on residues Ser-374 and Ser-378. At Thr-380 the chain carries Phosphothreonine. Phosphoserine is present on residues Ser-396, Ser-399, and Ser-404. Thr-406 carries the post-translational modification Phosphothreonine. Position 413 is a phosphoserine (Ser-413). The segment at 444–515 is disordered; the sequence is LQRSQTTTGR…SSPGIHLERS (72 aa). At Thr-451 the chain carries Phosphothreonine. Residue Ser-455 is modified to Phosphoserine. Thr-457 carries the post-translational modification Phosphothreonine. A phosphoserine mark is found at Ser-487, Ser-497, Ser-500, Ser-506, Ser-507, and Ser-515. Position 525 is a phosphothreonine (Thr-525). A Phosphoserine modification is found at Ser-592. Lys-618 participates in a covalent cross-link: Glycyl lysine isopeptide (Lys-Gly) (interchain with G-Cter in SUMO1); alternate. A Glycyl lysine isopeptide (Lys-Gly) (interchain with G-Cter in SUMO2); alternate cross-link involves residue Lys-618. Ser-631 is subject to Phosphoserine. 2 disordered regions span residues 652 to 697 and 773 to 1770; these read VDTD…EDPD and HLEA…TLRS. A compositionally biased stretch (basic and acidic residues) spans 673–687; that stretch reads GREREQHVGRTKDSE. Acidic residues predominate over residues 688–697; that stretch reads DNCDDSEDPD. Phosphoserine is present on residues Ser-782 and Ser-795. Lys-814 carries the post-translational modification N6-acetyllysine. Basic and acidic residues-rich tracts occupy residues 821-846, 853-864, 870-903, and 916-953; these read ETAERVGPERGPLERETEKLLPERQT, ELTRGIQDREQK, DTQRQESDKNGESASPERDRESLKVEIETSKEIQ, and AFEREVERPVADRECEPAELEEKVPKVILERDAQRGEP. Phosphoserine is present on residues Ser-957, Ser-1000, Ser-1035, Ser-1070, and Ser-1088. A compositionally biased stretch (polar residues) spans 957–969; that stretch reads SQDQKGQASSPTS. Residues 1079 to 1090 show a composition bias toward basic and acidic residues; that stretch reads TIRKTGQDRSQE. Basic residues predominate over residues 1105–1115; that stretch reads PKPKIITRKSS. Over residues 1131–1156 the composition is skewed to polar residues; sequence PSTSTAQPVTPKPTSQATRSRTNRSS. The interaction with the PRKDC complex stretch occupies residues 1150–1694; that stretch reads SRTNRSSVKT…KNRSSVKTPE (545 aa). Residues 1157 to 1169 show a composition bias toward low complexity; the sequence is VKTPEPVVPTVPE. Thr-1159 carries the phosphothreonine modification. Residues 1171 to 1189 are compositionally biased toward polar residues; it reads QPSTSTDQPVASEPTSQAT. Thr-1200 is subject to Phosphothreonine. Ser-1237 carries the phosphoserine modification. 3 positions are modified to phosphothreonine: Thr-1241, Thr-1282, and Thr-1304. The span at 1280–1292 shows a compositional bias: low complexity; the sequence is VKTPEPVVPTVPE. The segment covering 1294-1320 has biased composition (polar residues); it reads QPSTSTDQPVTSEPTSQATRGRTNRSS. The segment covering 1321 to 1333 has biased composition (low complexity); it reads VKTPEPVVPTVPE. Positions 1335–1353 are enriched in polar residues; the sequence is QPSTSTDQPVASEPTSQAT. The span at 1390-1402 shows a compositional bias: low complexity; the sequence is TSRTTRSRTNMSS. Polar residues-rich tracts occupy residues 1418–1434, 1456–1487, 1499–1527, and 1540–1559; these read PSTSTEQPVITEPTYQP, KLQSSTSTDQPITPEPTSQATRGRTNRSSVKS, QPSTSTHQPVTAKHTSQATRGRTNRSSVK, and QPSTSTHQPITPEPTSQATR. Phosphoserine is present on residues Ser-1483 and Ser-1484. Residue Lys-1486 is modified to N6-acetyllysine. Phosphothreonine occurs at positions 1509 and 1550. Low complexity predominate over residues 1567 to 1578; that stretch reads VKTPKIVVPTVP. The segment covering 1581-1598 has biased composition (polar residues); it reads QASTSTDQPVTSEPTSRT. A phosphothreonine mark is found at Thr-1617 and Thr-1632. A compositionally biased stretch (polar residues) spans 1626 to 1639; the sequence is STDQPITPKPTSRA. At Ser-1648 the chain carries Phosphoserine. Thr-1651 and Thr-1673 each carry phosphothreonine. A compositionally biased stretch (polar residues) spans 1664-1680; that stretch reads PSTSRSQLVTPEPTSRA. Phosphoserine is present on Ser-1688. Phosphothreonine occurs at positions 1692, 1714, 1748, and 1755. Residues 1705–1721 show a composition bias toward polar residues; the sequence is PTTSTDQPVTPKPTSRA. Polar residues predominate over residues 1761-1770; that stretch reads QGSQSKTLRS. Residue Ser-1765 is modified to Phosphoserine. Phosphothreonine is present on Thr-1781. Residues 1782-2173 are required for nuclear localization (NLS2); that stretch reads PEFQSPVTTD…VLSPLEMSST (392 aa). 2 positions are modified to phosphoserine: Ser-1786 and Ser-1795. The segment at 1809 to 1971 is disordered; that stretch reads RATGNPGSLT…NRSLRRTKLN (163 aa). Residue Lys-1824 forms a Glycyl lysine isopeptide (Lys-Gly) (interchain with G-Cter in SUMO2) linkage. Residue Ser-1859 is modified to Phosphoserine. Lys-1874 participates in a covalent cross-link: Glycyl lysine isopeptide (Lys-Gly) (interchain with G-Cter in SUMO2). Thr-1884 is modified (phosphothreonine). A Phosphoserine modification is found at Ser-1904. Residues 1907–1920 are compositionally biased toward polar residues; that stretch reads HQKQPQRGEVSQKT. A Glycyl lysine isopeptide (Lys-Gly) (interchain with G-Cter in SUMO1); alternate cross-link involves residue Lys-1924. A Glycyl lysine isopeptide (Lys-Gly) (interchain with G-Cter in SUMO2); alternate cross-link involves residue Lys-1924. Over residues 1931–1941 the composition is skewed to basic and acidic residues; the sequence is AEKPGKEEDVM. Thr-1942 is subject to Phosphothreonine. BRCT domains follow at residues 1976–2054 and 2075–2166; these read APKV…EYVV and RERR…FVLS. The residue at position 2027 (Arg-2027) is an Omega-N-methylarginine.

In terms of assembly, homodimer. Interacts with H2AX, which requires phosphorylation of H2AX on 'Ser-139'. Interacts with the MRN complex, composed of MRE11, RAD50, and NBN. Interacts with CHEK2, which requires ATM-mediated phosphorylation of 'Thr-68' within the FHA domain of CHEK2. Interacts constitutively with the BRCA1-BARD1 complex, SMC1A and TP53BP1. Interacts with ATM and FANCD2, and these interactions are reduced upon DNA damage. Also interacts with the PRKDC complex, composed of XRCC6/KU70, XRCC5/KU80 and PRKDC/XRCC7. This interaction may be required for PRKDC autophosphorylation, which is essential for DNA double strand break (DSB) repair. When phosphorylated by ATM, interacts with RNF8 (via FHA domain). Interacts with CEP164. When phosphorylated, interacts with APTX (via FHA-like domain). Interacts (when phosphorylated) with TOPBP1; promoting TOPBP1 localization to DNA damage sites during mitosis. Interacts (when phosphorylated) with NBN; promoting NBN and MRN complex localization to DNA damage sites. Phosphorylated upon exposure to ionizing radiation (IR), ultraviolet radiation (UV), and hydroxyurea (HU). Phosphorylation in response to IR requires ATM, NBN, and possibly CHEK2. Also phosphorylated during the G2/M phase of the cell cycle and during activation of the mitotic spindle checkpoint. Phosphorylation at Thr-4 by ATM stabilizes and enhances homodimerization via the FHA domain. Phosphorylated at Ser-168 and Ser-198 by CK2 in response to DNA damage during mitosis, promoting interaction with TOPBP1. Phosphorylated by CK2 in response to DNA damage, promoting interaction with NBN and recruitment of the MRN complex to DNA damage sites. In terms of processing, sumoylation at Lys-1924 by PIAS4 following DNA damage promotes ubiquitin-mediated degradation. Post-translationally, ubiquitinated by RNF4, leading to proteasomal degradation; undergoes 'Lys-48'-linked polyubiquitination.

The protein resides in the nucleus. It is found in the chromosome. Functionally, histone reader protein required for checkpoint-mediated cell cycle arrest in response to DNA damage within both the S phase and G2/M phases of the cell cycle. Specifically recognizes and binds histone H2AX phosphorylated at 'Ser-139', a marker of DNA damage, serving as a scaffold for the recruitment of DNA repair and signal transduction proteins to discrete foci of DNA damage sites. Also required for downstream events subsequent to the recruitment of these proteins. These include phosphorylation and activation of the ATM, CHEK1 and CHEK2 kinases, and stabilization of TP53/p53 and apoptosis. ATM and CHEK2 may also be activated independently by a parallel pathway mediated by TP53BP1. Required for chromosomal stability during mitosis by promoting recruitment of TOPBP1 to DNA double strand breaks (DSBs): TOPBP1 forms filamentous assemblies that bridge MDC1 and tether broken chromosomes during mitosis. Required for the repair of DSBs via homologous recombination by promoting recruitment of NBN component of the MRN complex to DSBs. This Macaca mulatta (Rhesus macaque) protein is Mediator of DNA damage checkpoint protein 1 (MDC1).